A 142-amino-acid chain; its full sequence is Large ribosomal subunit protein uL11 (142 aa).

This sequence belongs to the universal ribosomal protein uL11 family. Part of the ribosomal stalk of the 50S ribosomal subunit. Interacts with L10 and the large rRNA to form the base of the stalk. L10 forms an elongated spine to which L12 dimers bind in a sequential fashion forming a multimeric L10(L12)X complex. One or more lysine residues are methylated.

Functionally, forms part of the ribosomal stalk which helps the ribosome interact with GTP-bound translation factors. The protein is Large ribosomal subunit protein uL11 of Shewanella frigidimarina (strain NCIMB 400).